Here is a 508-residue protein sequence, read N- to C-terminus: Bifunctional purine biosynthesis protein PurH (508 aa).

The region spanning 1 to 144 (MTRALLSVSD…KNFAGVLPIV (144 aa)) is the MGS-like domain.

This sequence belongs to the PurH family.

The enzyme catalyses (6R)-10-formyltetrahydrofolate + 5-amino-1-(5-phospho-beta-D-ribosyl)imidazole-4-carboxamide = 5-formamido-1-(5-phospho-D-ribosyl)imidazole-4-carboxamide + (6S)-5,6,7,8-tetrahydrofolate. It carries out the reaction IMP + H2O = 5-formamido-1-(5-phospho-D-ribosyl)imidazole-4-carboxamide. It participates in purine metabolism; IMP biosynthesis via de novo pathway; 5-formamido-1-(5-phospho-D-ribosyl)imidazole-4-carboxamide from 5-amino-1-(5-phospho-D-ribosyl)imidazole-4-carboxamide (10-formyl THF route): step 1/1. The protein operates within purine metabolism; IMP biosynthesis via de novo pathway; IMP from 5-formamido-1-(5-phospho-D-ribosyl)imidazole-4-carboxamide: step 1/1. The sequence is that of Bifunctional purine biosynthesis protein PurH from Leuconostoc citreum (strain KM20).